Reading from the N-terminus, the 259-residue chain is 3-hydroxypropionyl-coenzyme A dehydratase (259 aa).

Residue Glu113 is the Nucleophile of the active site. Catalysis depends on Glu133, which acts as the Proton acceptor.

Belongs to the enoyl-CoA hydratase/isomerase family. As to quaternary structure, monomer.

The enzyme catalyses 3-hydroxypropanoyl-CoA = acryloyl-CoA + H2O. Functionally, plays a role in autotrophic carbon fixation via the 3-hydroxypropionate/4-hydroxybutyrate cycle. Catalyzes the reversible dehydration of 3-hydroxypropionyl-CoA to form acryloyl-CoA, and the reversible dehydration of (S)-3-hydroxybutyryl-CoA to form crotonyl-CoA. Inactive towards (R)-3-hydroxybutyryl-CoA. The sequence is that of 3-hydroxypropionyl-coenzyme A dehydratase from Metallosphaera sedula (strain ATCC 51363 / DSM 5348 / JCM 9185 / NBRC 15509 / TH2).